The following is a 327-amino-acid chain: MKEISGIKVKVESGSKYTTDHGFYAVKDGIRNKKENAVHVRKPDWLKVQKQDSKEYLKVKSITKKHKLSTVCEEARCPNINECWSHGTATIMLMGSVCTRACKFCSVDTGNPKGWLDKDEPMNAAESVKLMGLEYVVLTSVDRDDLEDGGAGHYAATITAIKNLDENIKVEALTPDFAGINENIDKIINTKVDVIAQNIETVERLTHPVRDPRAGYWQTLNFLKYVKQKSPNVLTKTSIMVGLGETDEEIYKTMDDARSVGVDIITLGQYMQPTKHHLSVERFVTPQQFEEYRKVGLEKGFLEVASGPMVRSSYRADRVFKRNNLDL.

[4Fe-4S] cluster-binding residues include C72, C77, C83, C98, C102, C105, and S313. Residues 83–302 (CWSHGTATIM…RKVGLEKGFL (220 aa)) form the Radical SAM core domain.

The protein belongs to the radical SAM superfamily. Lipoyl synthase family. [4Fe-4S] cluster is required as a cofactor.

Its subcellular location is the cytoplasm. The catalysed reaction is [[Fe-S] cluster scaffold protein carrying a second [4Fe-4S](2+) cluster] + N(6)-octanoyl-L-lysyl-[protein] + 2 oxidized [2Fe-2S]-[ferredoxin] + 2 S-adenosyl-L-methionine + 4 H(+) = [[Fe-S] cluster scaffold protein] + N(6)-[(R)-dihydrolipoyl]-L-lysyl-[protein] + 4 Fe(3+) + 2 hydrogen sulfide + 2 5'-deoxyadenosine + 2 L-methionine + 2 reduced [2Fe-2S]-[ferredoxin]. Its pathway is protein modification; protein lipoylation via endogenous pathway; protein N(6)-(lipoyl)lysine from octanoyl-[acyl-carrier-protein]: step 2/2. Functionally, catalyzes the radical-mediated insertion of two sulfur atoms into the C-6 and C-8 positions of the octanoyl moiety bound to the lipoyl domains of lipoate-dependent enzymes, thereby converting the octanoylated domains into lipoylated derivatives. The polypeptide is Lipoyl synthase (Francisella tularensis subsp. holarctica (strain FTNF002-00 / FTA)).